We begin with the raw amino-acid sequence, 199 residues long: Holliday junction branch migration complex subunit RuvA (199 aa).

The segment at Met-1 to Ser-63 is domain I. Residues Asp-64–Ala-141 are domain II. Residues Ala-141–Val-145 form a flexible linker region. A domain III region spans residues Val-146–Arg-199.

Belongs to the RuvA family. In terms of assembly, homotetramer. Forms an RuvA(8)-RuvB(12)-Holliday junction (HJ) complex. HJ DNA is sandwiched between 2 RuvA tetramers; dsDNA enters through RuvA and exits via RuvB. An RuvB hexamer assembles on each DNA strand where it exits the tetramer. Each RuvB hexamer is contacted by two RuvA subunits (via domain III) on 2 adjacent RuvB subunits; this complex drives branch migration. In the full resolvosome a probable DNA-RuvA(4)-RuvB(12)-RuvC(2) complex forms which resolves the HJ.

Its subcellular location is the cytoplasm. The RuvA-RuvB-RuvC complex processes Holliday junction (HJ) DNA during genetic recombination and DNA repair, while the RuvA-RuvB complex plays an important role in the rescue of blocked DNA replication forks via replication fork reversal (RFR). RuvA specifically binds to HJ cruciform DNA, conferring on it an open structure. The RuvB hexamer acts as an ATP-dependent pump, pulling dsDNA into and through the RuvAB complex. HJ branch migration allows RuvC to scan DNA until it finds its consensus sequence, where it cleaves and resolves the cruciform DNA. The polypeptide is Holliday junction branch migration complex subunit RuvA (Rhodococcus erythropolis (strain PR4 / NBRC 100887)).